The chain runs to 424 residues: Serine--tRNA ligase (424 aa).

230 to 232 (TAE) provides a ligand contact to L-serine. Position 261-263 (261-263 (RSE)) interacts with ATP. An L-serine-binding site is contributed by Glu-284. 348-351 (EISS) contacts ATP. Position 384 (Ser-384) interacts with L-serine.

It belongs to the class-II aminoacyl-tRNA synthetase family. Type-1 seryl-tRNA synthetase subfamily. In terms of assembly, homodimer. The tRNA molecule binds across the dimer.

It localises to the cytoplasm. It carries out the reaction tRNA(Ser) + L-serine + ATP = L-seryl-tRNA(Ser) + AMP + diphosphate + H(+). The catalysed reaction is tRNA(Sec) + L-serine + ATP = L-seryl-tRNA(Sec) + AMP + diphosphate + H(+). It participates in aminoacyl-tRNA biosynthesis; selenocysteinyl-tRNA(Sec) biosynthesis; L-seryl-tRNA(Sec) from L-serine and tRNA(Sec): step 1/1. In terms of biological role, catalyzes the attachment of serine to tRNA(Ser). Is also able to aminoacylate tRNA(Sec) with serine, to form the misacylated tRNA L-seryl-tRNA(Sec), which will be further converted into selenocysteinyl-tRNA(Sec). The chain is Serine--tRNA ligase from Nitratidesulfovibrio vulgaris (strain ATCC 29579 / DSM 644 / CCUG 34227 / NCIMB 8303 / VKM B-1760 / Hildenborough) (Desulfovibrio vulgaris).